Reading from the N-terminus, the 314-residue chain is 2,3-dihydroxyphenylpropionate/2,3-dihydroxicinnamic acid 1,2-dioxygenase 1 (314 aa).

Catalysis depends on His-115, which acts as the Proton donor. Residue His-179 is the Proton acceptor of the active site.

It belongs to the LigB/MhpB extradiol dioxygenase family. Homotetramer. Fe(2+) serves as cofactor.

It catalyses the reaction 3-(2,3-dihydroxyphenyl)propanoate + O2 = (2Z,4E)-2-hydroxy-6-oxonona-2,4-dienedioate + H(+). It carries out the reaction (2E)-3-(2,3-dihydroxyphenyl)prop-2-enoate + O2 = (2Z,4E,7E)-2-hydroxy-6-oxonona-2,4,7-trienedioate + H(+). Its pathway is aromatic compound metabolism; 3-phenylpropanoate degradation. Functionally, catalyzes the non-heme iron(II)-dependent oxidative cleavage of 2,3-dihydroxyphenylpropionic acid and 2,3-dihydroxicinnamic acid into 2-hydroxy-6-ketononadienedioate and 2-hydroxy-6-ketononatrienedioate, respectively. This Pseudomonas putida (Arthrobacter siderocapsulatus) protein is 2,3-dihydroxyphenylpropionate/2,3-dihydroxicinnamic acid 1,2-dioxygenase 1.